Consider the following 378-residue polypeptide: Anhydro-N-acetylmuramic acid kinase (378 aa).

Position 22–29 (22–29 (GTSLDGAD)) interacts with ATP.

It belongs to the anhydro-N-acetylmuramic acid kinase family.

It catalyses the reaction 1,6-anhydro-N-acetyl-beta-muramate + ATP + H2O = N-acetyl-D-muramate 6-phosphate + ADP + H(+). It participates in amino-sugar metabolism; 1,6-anhydro-N-acetylmuramate degradation. It functions in the pathway cell wall biogenesis; peptidoglycan recycling. Functionally, catalyzes the specific phosphorylation of 1,6-anhydro-N-acetylmuramic acid (anhMurNAc) with the simultaneous cleavage of the 1,6-anhydro ring, generating MurNAc-6-P. Is required for the utilization of anhMurNAc either imported from the medium or derived from its own cell wall murein, and thus plays a role in cell wall recycling. This Bordetella petrii (strain ATCC BAA-461 / DSM 12804 / CCUG 43448) protein is Anhydro-N-acetylmuramic acid kinase.